Consider the following 86-residue polypeptide: Serine protease inhibitor Kazal-type 9 (86 aa).

The first 19 residues, 1–19, serve as a signal peptide directing secretion; that stretch reads MRATAIVLLLALTLATMFS. The 61-residue stretch at 26–86 folds into the Kazal-like domain; it reads TKQMVDCSHY…TLKFVHFGKC (61 aa). Disulfide bonds link C32-C68, C46-C65, and C54-C86.

As to quaternary structure, dimer. Interacts with KLK5 and KLK8. In terms of tissue distribution, skin. Highly expressed at sites of hyperkeratosis. Also detected in thymus, tonsils, testis, pancreas, liver, placenta and brain. Expressed at stratum granulosum and stratum corneum at palmar and plantar sites (at protein level).

The protein resides in the secreted. Serine protease inhibitor which specifically inhibits KLK5. May contribute to the regulation of the desquamation process in skin by inhibiting KLK5. In Homo sapiens (Human), this protein is Serine protease inhibitor Kazal-type 9 (SPINK9).